The following is a 214-amino-acid chain: RNA pyrophosphohydrolase (214 aa).

The Nudix hydrolase domain occupies 6–149; the sequence is GFRPNVGIIL…KRDVYQLALT (144 aa). The Nudix box motif lies at 38 to 59; sequence GGIKYGETPMQAMYRELHEETG.

This sequence belongs to the Nudix hydrolase family. RppH subfamily. It depends on a divalent metal cation as a cofactor.

Its function is as follows. Accelerates the degradation of transcripts by removing pyrophosphate from the 5'-end of triphosphorylated RNA, leading to a more labile monophosphorylated state that can stimulate subsequent ribonuclease cleavage. This is RNA pyrophosphohydrolase from Burkholderia orbicola (strain MC0-3).